A 346-amino-acid chain; its full sequence is Putative transmembrane protein ORF346 (346 aa).

6 consecutive transmembrane segments (helical) span residues 67 to 87, 104 to 124, 134 to 154, 156 to 176, 181 to 201, and 219 to 241; these read LPIILLFVASVPARFIYCIVY, IINPILDFFTAPLVYLAVGLT, PPYLIGVLTDACLPGIVSGIY, AIGDIFYTIGYGIGFILGLFI, IILYSICTLVTFGLTFGLCLS, and YPFSFLAGLLQNYINCGCVLGSY. The disordered stretch occupies residues 294–346; the sequence is SEYPHSENGSGGSGGSGSGSGSGGSGSGGNSGSGGSGSGSSGSGGNSGSGNNG. The span at 302-346 shows a compositional bias: gly residues; the sequence is GSGGSGGSGSGSGSGGSGSGGNSGSGGSGSGSSGSGGNSGSGNNG.

It localises to the host membrane. This Acidianus bottle-shaped virus (isolate Italy/Pozzuoli) (ABV) protein is Putative transmembrane protein ORF346.